A 404-amino-acid polypeptide reads, in one-letter code: Keratin, type I cuticular Ha3-I (404 aa).

Residues 1–56 (MSYSCGLPSLSCRTSCSSRPCVPPSCHGCTLPGACNIPANVSNCNWFCEGSFNGSE) form a head region. The IF rod domain occupies 56 to 367 (EKETMQFLND…SLLESEDCKL (312 aa)). The coil 1A stretch occupies residues 57-91 (KETMQFLNDRLASYLEKVRQLERDNAELENLIRER). A linker 1 region spans residues 92–102 (SQQQEPLVCAS). The interval 103–203 (YQSYFKTIEE…HEQEVNTLRC (101 aa)) is coil 1B. The tract at residues 204–219 (QLGDRLNVEVDAAPTV) is linker 12. Residues 220–363 (DLNQVLNETR…NTYRSLLESE (144 aa)) form a coil 2 region. Positions 364 to 404 (DCKLPSNPCATTNACDKSTGPCISNPCGLRARCGPCNTFGY) are tail.

Belongs to the intermediate filament family. As to expression, expressed in the hair follicles.

This is Keratin, type I cuticular Ha3-I (KRT33A) from Homo sapiens (Human).